We begin with the raw amino-acid sequence, 24 residues long: M-ectatotoxin-Eb2b (24 aa).

As to expression, expressed by the venom gland.

The protein resides in the secreted. In terms of biological role, antimicrobial peptide active against Gram-negative bacterium E.coli MH1 (MIC=2.5 uM) and P.aeruginosa PAO1 (MIC=10 uM) and against Gram-positive bacterium A.globiformis VKM Ac-1112 (MIC=0.6 uM). This Ectatomma brunneum (Ant) protein is M-ectatotoxin-Eb2b.